A 621-amino-acid polypeptide reads, in one-letter code: Glutamyl-tRNA(Gln) amidotransferase subunit E (621 aa).

Belongs to the GatB/GatE family. GatE subfamily. Heterodimer of GatD and GatE.

The catalysed reaction is L-glutamyl-tRNA(Gln) + L-glutamine + ATP + H2O = L-glutaminyl-tRNA(Gln) + L-glutamate + ADP + phosphate + H(+). Allows the formation of correctly charged Gln-tRNA(Gln) through the transamidation of misacylated Glu-tRNA(Gln) in organisms which lack glutaminyl-tRNA synthetase. The reaction takes place in the presence of glutamine and ATP through an activated gamma-phospho-Glu-tRNA(Gln). The GatDE system is specific for glutamate and does not act on aspartate. The sequence is that of Glutamyl-tRNA(Gln) amidotransferase subunit E from Methanobrevibacter smithii (strain ATCC 35061 / DSM 861 / OCM 144 / PS).